Consider the following 683-residue polypeptide: Probable potassium transport system protein Kup 1 (683 aa).

The next 12 membrane-spanning stretches (helical) occupy residues 13-33 (GLLIAIGIVYGDIGTSPLYVM), 55-75 (ISLVLWTVTLLTTLQTVFIAL), 98-118 (WLVLPALIGGAAILADGTLTP), 139-159 (VPVSTQGTVIAITVVILLLLF), 168-188 (IIGKAFGPIMFIWFTFLGVIG), 218-238 (AGIFILGSIFLATTGAEALYS), 251-271 (SWPYVFVCLSLNYFGQGVWIL), 296-316 (LAAIVLATIAAVIASQALITG), 345-365 (IYIPSVNKMICAATIAIVLFF), 376-396 (GLSITISMLMTTILLYEWLAM), 401-421 (TIWNWLFLIFFGFLDVMFMLA), and 426-446 (FMHGGYVSLVIAGFIGIIMYV).

This sequence belongs to the HAK/KUP transporter (TC 2.A.72) family.

It is found in the cell membrane. It carries out the reaction K(+)(in) + H(+)(in) = K(+)(out) + H(+)(out). In terms of biological role, transport of potassium into the cell. Likely operates as a K(+):H(+) symporter. In Lactobacillus johnsonii (strain CNCM I-12250 / La1 / NCC 533), this protein is Probable potassium transport system protein Kup 1.